The chain runs to 1154 residues: Coiled-coil domain-containing protein 136 (1154 aa).

The disordered stretch occupies residues 1–48; that stretch reads MQAMEGEVLLPALYEEEEEEEEEEEEVEEEEEQVQKGGSVGSLSVNKH. Over residues 14 to 32 the composition is skewed to acidic residues; the sequence is YEEEEEEEEEEEEVEEEEE. Serine 52 carries the phosphoserine modification. Coiled-coil stretches lie at residues 696 to 733 and 859 to 974; these read QAKQ…LQVQ and KLQA…RPSV. The segment covering 1031–1058 has biased composition (basic and acidic residues); it reads DGLAKEEEKKEEMEEEKKQVKEEAKEQC. Positions 1031 to 1131 are disordered; the sequence is DGLAKEEEKK…SSPTPNPPIF (101 aa). A compositionally biased stretch (acidic residues) spans 1077–1109; it reads DQEENEEDKEEEEKEEDSEEEEDDADSSLESPE. A helical membrane pass occupies residues 1130–1150; that stretch reads IFSLPLVGLVVISALLWCWWA.

Expressed in gastric tissues. Down-regulated in gastric cancer.

It is found in the cytoplasmic vesicle. Its subcellular location is the secretory vesicle. It localises to the acrosome membrane. Its function is as follows. May play a role in acrosome formation in spermatogenesis and in fertilization. This Homo sapiens (Human) protein is Coiled-coil domain-containing protein 136 (CCDC136).